Consider the following 361-residue polypeptide: D-alanine--D-alanine ligase (361 aa).

One can recognise an ATP-grasp domain in the interval 140 to 345 (KHLFAQAGLD…YAELIEKLVA (206 aa)). ATP is bound at residue 173 to 228 (EGELGYPCFVKPANLGSSVGISKCRSREELDQAFELAFQYDRKIVVEEGVIGREIE). Residues D299, E312, and N314 each coordinate Mg(2+).

Belongs to the D-alanine--D-alanine ligase family. Requires Mg(2+) as cofactor. The cofactor is Mn(2+).

It localises to the cytoplasm. It carries out the reaction 2 D-alanine + ATP = D-alanyl-D-alanine + ADP + phosphate + H(+). It participates in cell wall biogenesis; peptidoglycan biosynthesis. Functionally, cell wall formation. The protein is D-alanine--D-alanine ligase of Bacillus licheniformis (strain ATCC 14580 / DSM 13 / JCM 2505 / CCUG 7422 / NBRC 12200 / NCIMB 9375 / NCTC 10341 / NRRL NRS-1264 / Gibson 46).